Here is a 748-residue protein sequence, read N- to C-terminus: LPS-assembly protein LptD (748 aa).

A signal peptide spans 1–19 (MSKTWGILMLSVLSAPSLA).

The protein belongs to the LptD family. As to quaternary structure, component of the lipopolysaccharide transport and assembly complex. Interacts with LptE and LptA.

It localises to the cell outer membrane. Together with LptE, is involved in the assembly of lipopolysaccharide (LPS) at the surface of the outer membrane. In Pseudoalteromonas translucida (strain TAC 125), this protein is LPS-assembly protein LptD.